The following is a 331-amino-acid chain: MLSLIKIAAAQTQWPKRDNSKYSRHGVSLSMNINPLLRAYEHGVRRFPRENLQNADLSGFTLISVDFERTNLIGSNLQRTFLTKARLGHCQMNWADLTYAKLNQADLSHADLTKASLYGAFAVKTNFKGAKLSGATLAHANLRGANLEQTNLTGANLFAANLREANFQKADFSWANLQEACLSLANLRDARLWATDLRRAFMKEMDLSALSLHGLAMDGAKLTGSCLRDTNLSHSSLRGANLRGADLTGANLTGVDLTGADLMGANLTQVVWHDAVVEGVNWEEAIADQSMFREGILGLGNHHNHRSHNVHQGRQGLNISCFGGLQAAYVI.

5 consecutive Pentapeptide repeat domains span residues 50 to 89, 90 to 129, 140 to 179, 185 to 224, and 230 to 269; these read ENLQ…RLGH, CQMN…NFKG, ANLR…NLQE, ANLR…KLTG, and TNLS…NLTQ.

This is an uncharacterized protein from Synechocystis sp. (strain ATCC 27184 / PCC 6803 / Kazusa).